Reading from the N-terminus, the 203-residue chain is MSIKYVATSKLPTPWGVFAMHGFEDTETGKEHVALTFGTLNSDAPVLGRIHSECLTGDALFSLRCDCGFQLQTAMQNIAETGSGFILYLRQEGRGIGLLNKIRAYELQDKGANTVEANEQLGFPADMRKYDMIQPMLEQIGVKHVRLMTNNPRKVKAMKEIGIEVVERVPLQVGKNRYNEAYLKTKSTELGHMMSEYHFTDEE.

49–53 (RIHSE) lines the GTP pocket. Cys-54, Cys-65, and Cys-67 together coordinate Zn(2+). GTP is bound by residues Gln-70, 92–94 (EGR), and Thr-114. Asp-126 functions as the Proton acceptor in the catalytic mechanism. Arg-128 serves as the catalytic Nucleophile. Thr-149 and Lys-154 together coordinate GTP.

It belongs to the GTP cyclohydrolase II family. The cofactor is Zn(2+).

It carries out the reaction GTP + 4 H2O = 2,5-diamino-6-hydroxy-4-(5-phosphoribosylamino)-pyrimidine + formate + 2 phosphate + 3 H(+). It functions in the pathway cofactor biosynthesis; riboflavin biosynthesis; 5-amino-6-(D-ribitylamino)uracil from GTP: step 1/4. Its function is as follows. Catalyzes the conversion of GTP to 2,5-diamino-6-ribosylamino-4(3H)-pyrimidinone 5'-phosphate (DARP), formate and pyrophosphate. The polypeptide is GTP cyclohydrolase-2 (Shewanella sp. (strain MR-7)).